A 143-amino-acid polypeptide reads, in one-letter code: Small ribosomal subunit protein uS11c (143 aa).

This sequence belongs to the universal ribosomal protein uS11 family. In terms of assembly, part of the 30S ribosomal subunit.

It localises to the plastid. It is found in the chloroplast. The chain is Small ribosomal subunit protein uS11c from Cenchrus americanus (Pearl millet).